Here is a 261-residue protein sequence, read N- to C-terminus: Phosphatidylglycerol--prolipoprotein diacylglyceryl transferase (261 aa).

Helical transmembrane passes span 20–40 (LAIH…VWLA), 54–74 (IIDF…LYYV), and 94–114 (GGGA…VFSY). Arg-139 is a binding site for a 1,2-diacyl-sn-glycero-3-phospho-(1'-sn-glycerol). 3 helical membrane passes run 175–195 (MPTF…VMVF), 205–225 (GDIF…VEGM), and 235–255 (ARVS…LFIY).

This sequence belongs to the Lgt family.

The protein localises to the cell membrane. It carries out the reaction L-cysteinyl-[prolipoprotein] + a 1,2-diacyl-sn-glycero-3-phospho-(1'-sn-glycerol) = an S-1,2-diacyl-sn-glyceryl-L-cysteinyl-[prolipoprotein] + sn-glycerol 1-phosphate + H(+). The protein operates within protein modification; lipoprotein biosynthesis (diacylglyceryl transfer). In terms of biological role, catalyzes the transfer of the diacylglyceryl group from phosphatidylglycerol to the sulfhydryl group of the N-terminal cysteine of a prolipoprotein, the first step in the formation of mature lipoproteins. In Lactococcus lactis subsp. lactis (strain IL1403) (Streptococcus lactis), this protein is Phosphatidylglycerol--prolipoprotein diacylglyceryl transferase.